A 547-amino-acid chain; its full sequence is CTP synthase (547 aa).

Residues 1–265 (MARYIFITGG…DQAVLDAFQI (265 aa)) are amidoligase domain. Ser-13 is a binding site for CTP. Ser-13 contributes to the UTP binding site. Residues 14–19 (SLGKGL) and Asp-71 each bind ATP. Asp-71 and Glu-139 together coordinate Mg(2+). Residues 146-148 (DIE), 186-191 (KTKPTQ), and Lys-222 each bind CTP. Residues 186–191 (KTKPTQ) and Lys-222 each bind UTP. Positions 291–546 (RIAVVGKYTQ…IRAAMDNERL (256 aa)) constitute a Glutamine amidotransferase type-1 domain. Gly-352 is a binding site for L-glutamine. The Nucleophile; for glutamine hydrolysis role is filled by Cys-379. L-glutamine is bound by residues 380–383 (LGMQ), Glu-403, and Arg-474. Residues His-519 and Glu-521 contribute to the active site.

This sequence belongs to the CTP synthase family. As to quaternary structure, homotetramer.

It carries out the reaction UTP + L-glutamine + ATP + H2O = CTP + L-glutamate + ADP + phosphate + 2 H(+). It catalyses the reaction L-glutamine + H2O = L-glutamate + NH4(+). The catalysed reaction is UTP + NH4(+) + ATP = CTP + ADP + phosphate + 2 H(+). The protein operates within pyrimidine metabolism; CTP biosynthesis via de novo pathway; CTP from UDP: step 2/2. Its activity is regulated as follows. Allosterically activated by GTP, when glutamine is the substrate; GTP has no effect on the reaction when ammonia is the substrate. The allosteric effector GTP functions by stabilizing the protein conformation that binds the tetrahedral intermediate(s) formed during glutamine hydrolysis. Inhibited by the product CTP, via allosteric rather than competitive inhibition. In terms of biological role, catalyzes the ATP-dependent amination of UTP to CTP with either L-glutamine or ammonia as the source of nitrogen. Regulates intracellular CTP levels through interactions with the four ribonucleotide triphosphates. The chain is CTP synthase from Paracoccus denitrificans (strain Pd 1222).